The chain runs to 705 residues: Elongation factor G (705 aa).

The region spanning 8 to 290 (ERYRNFGIMA…GVVHLLPSPA (283 aa)) is the tr-type G domain. GTP-binding positions include 17–24 (AHIDAGKT), 88–92 (DTPGH), and 142–145 (NKMD). Residues 290–309 (ADRPPVQGIDEDEKEDTRAA) are disordered.

This sequence belongs to the TRAFAC class translation factor GTPase superfamily. Classic translation factor GTPase family. EF-G/EF-2 subfamily.

It is found in the cytoplasm. Catalyzes the GTP-dependent ribosomal translocation step during translation elongation. During this step, the ribosome changes from the pre-translocational (PRE) to the post-translocational (POST) state as the newly formed A-site-bound peptidyl-tRNA and P-site-bound deacylated tRNA move to the P and E sites, respectively. Catalyzes the coordinated movement of the two tRNA molecules, the mRNA and conformational changes in the ribosome. This is Elongation factor G from Xanthomonas oryzae pv. oryzae (strain MAFF 311018).